Here is a 192-residue protein sequence, read N- to C-terminus: Ribosome maturation factor RimM (192 aa).

One can recognise a PRC barrel domain in the interval 115 to 189 (EGEYYLSDLI…RIEITPPKGL (75 aa)).

It belongs to the RimM family. As to quaternary structure, binds ribosomal protein uS19.

It localises to the cytoplasm. Its function is as follows. An accessory protein needed during the final step in the assembly of 30S ribosomal subunit, possibly for assembly of the head region. Essential for efficient processing of 16S rRNA. May be needed both before and after RbfA during the maturation of 16S rRNA. It has affinity for free ribosomal 30S subunits but not for 70S ribosomes. This chain is Ribosome maturation factor RimM, found in Acaryochloris marina (strain MBIC 11017).